The chain runs to 483 residues: Probable Xaa-Pro aminopeptidase MCYG_06503 (483 aa).

Positions 233, 244, 409, and 453 each coordinate Mn(2+).

This sequence belongs to the peptidase M24B family. The cofactor is Mn(2+).

It carries out the reaction Release of any N-terminal amino acid, including proline, that is linked to proline, even from a dipeptide or tripeptide.. Functionally, catalyzes the removal of a penultimate prolyl residue from the N-termini of peptides. The sequence is that of Probable Xaa-Pro aminopeptidase MCYG_06503 from Arthroderma otae (strain ATCC MYA-4605 / CBS 113480) (Microsporum canis).